Reading from the N-terminus, the 711-residue chain is Polyribonucleotide nucleotidyltransferase (711 aa).

2 residues coordinate Mg(2+): aspartate 486 and aspartate 492. The 60-residue stretch at 553–612 (PRIHTIKINPDKIKDVIGKGGSVIRALTEETGTTIEIEDDGTVKIAATDGEKAKHAIRRI) folds into the KH domain. Residues 622–690 (GRVYTGKVTR…RQGRIRLSIK (69 aa)) form the S1 motif domain. The tract at residues 689 to 711 (IKEATEQSQPAAAPEAPAAEQGE) is disordered. The segment covering 694 to 711 (EQSQPAAAPEAPAAEQGE) has biased composition (low complexity).

It belongs to the polyribonucleotide nucleotidyltransferase family. In terms of assembly, component of the RNA degradosome, which is a multiprotein complex involved in RNA processing and mRNA degradation. Requires Mg(2+) as cofactor.

The protein localises to the cytoplasm. It carries out the reaction RNA(n+1) + phosphate = RNA(n) + a ribonucleoside 5'-diphosphate. Its function is as follows. Involved in mRNA degradation. Catalyzes the phosphorolysis of single-stranded polyribonucleotides processively in the 3'- to 5'-direction. The sequence is that of Polyribonucleotide nucleotidyltransferase from Escherichia coli (strain SE11).